Reading from the N-terminus, the 79-residue chain is Short neurotoxin 6 (79 aa).

A signal peptide spans 1–21 (MKTLLLTLVMVTIMCLDLGYT). 4 disulfides stabilise this stretch: cysteine 24/cysteine 41, cysteine 34/cysteine 59, cysteine 63/cysteine 71, and cysteine 72/cysteine 77.

It belongs to the three-finger toxin family. Short-chain subfamily. Type III alpha-neurotoxin sub-subfamily. As to expression, expressed by the venom gland.

It is found in the secreted. Binds with high affinity to muscle nicotinic acetylcholine receptor (nAChR) and hinders acetylcholine binding to the receptor, thereby impairing neuromuscular transmission. Competes with the binding of alpha-bungarotoxin on muscle AChR (from Torpedo) with an IC(50) of 0.18 uM. Causes muscle paralysis, spasms and increased respiration. The polypeptide is Short neurotoxin 6 (Pseudonaja textilis (Eastern brown snake)).